A 690-amino-acid polypeptide reads, in one-letter code: Molting protein mlt-10 (690 aa).

A signal peptide spans 1–18 (MRNLNLILFTALAAVTYA). Asn42 and Asn204 each carry an N-linked (GlcNAc...) asparagine glycan. Residues 219-285 (IKKLGEEAKR…MRKKEADEIR (67 aa)) adopt a coiled-coil conformation. Asn305 and Asn415 each carry an N-linked (GlcNAc...) asparagine glycan. 5 helical membrane passes run 514–534 (PFILTPLTFASAPLSNTFIVL), 544–564 (LSPAVLGPIILSPWVFVPLIL), 579–599 (FSPIILSPLVLHPLILVPGVF), 618–638 (VFTPLILSPFALNPLILTPMV), and 643–663 (ILSPFVLSPIILSPQALFAVV).

It belongs to the mlt-10-like family. In terms of tissue distribution, expressed in the major body hypodermal syncytium (Hyp7), the dorsal and ventral ridges of the hypodermis, hypodermal cells in the head and tail, and the pharyngeal myoepithelium, but not the lateral seam cells.

The protein localises to the membrane. The protein resides in the secreted. Functionally, required for the efficient removal of larval cuticles during the molting cycle as well as the synthesis of new cuticles. This is Molting protein mlt-10 from Caenorhabditis elegans.